We begin with the raw amino-acid sequence, 166 residues long: MAEIGEFLKKYAGFCGLLPPSVDNSLLDFLANLPIILVFLITMPVRFFICIFAGLAKVNPICVLINLLPPLAIAIPFVTAQTPPVCSTQCQYCQSGKGECLNYNPTIAKYFTQCEKQLSVLNKIFCLVGIIIADVLNPILAFINPLIYLAIHKVICLNTNPCICGL.

Helical transmembrane passes span 35–55, 60–80, and 124–144; these read IILV…FAGL, PICV…FVTA, and IFCL…AFIN.

Its subcellular location is the host membrane. In Acidianus convivator (ABV), this protein is Putative transmembrane protein ORF166.